A 968-amino-acid polypeptide reads, in one-letter code: Serine/threonine-protein kinase 10 (968 aa).

2 positions are modified to phosphoserine: serine 13 and serine 20. The Protein kinase domain maps to 36–294; sequence WEIVGELGDG…AAQLLEHPFV (259 aa). ATP-binding positions include 42–50 and lysine 65; that span reads LGDGAFGKV. Aspartate 157 serves as the catalytic Proton acceptor. Residues 175–224 are activation segment; that stretch reads DFGVSAKNLKTLQKRDSFIGTPYWMAPEVVMCETMKDTPYDYKADIWSLG. Serine 191 carries the post-translational modification Phosphoserine. Composition is skewed to polar residues over residues 337–351 and 361–393; these read LENH…SPPS and SPST…TTSP. 2 disordered regions span residues 337–411 and 425–490; these read LENH…VPLR and AQEK…CSSL. 6 positions are modified to phosphoserine: serine 438, serine 450, serine 454, serine 485, serine 514, and serine 549. The segment covering 441-457 has biased composition (polar residues); that stretch reads ANRSQKASQSRPNSSAL. A coiled-coil region spans residues 573–947; that stretch reads QKEEHRNQTQ…FFKLSEEAEC (375 aa). 4 disordered regions span residues 668-690, 827-865, 910-929, and 944-968; these read VEKL…HTQK, INGG…HENQ, LKEW…EDLN, and EAEC…ADAS. The span at 835-865 shows a compositional bias: basic and acidic residues; sequence EQREKIKQFSQQEEKRQKSERLQQQQKHENQ. Threonine 952 carries the post-translational modification Phosphothreonine.

The protein belongs to the protein kinase superfamily. STE Ser/Thr protein kinase family. STE20 subfamily. In terms of assembly, homodimer; homodimerization is required for activation segment autophosphorylation. Post-translationally, autophosphorylates following homodimerization, leading to activation of the protein. Highly expressed in rapidly proliferating tissues (spleen, placenta, and peripheral blood leukocytes). Also expressed in brain, heart, skeletal muscle, colon, thymus, kidney, liver, small intestine and lung.

The protein resides in the cell membrane. It catalyses the reaction L-seryl-[protein] + ATP = O-phospho-L-seryl-[protein] + ADP + H(+). The enzyme catalyses L-threonyl-[protein] + ATP = O-phospho-L-threonyl-[protein] + ADP + H(+). With respect to regulation, inhibited by the pyrrole-indolinone inhibitor SU11274 (K00593): intercalates between the ATP-binding Lys-65 and alpha-C glutamate (Glu-81), resulting in a partial disordering of the lysine side chain. Also specifically inhibited by erlotinib. Slightly inhibited by gefitinib. Its function is as follows. Serine/threonine-protein kinase involved in regulation of lymphocyte migration. Phosphorylates MSN, and possibly PLK1. Involved in regulation of lymphocyte migration by mediating phosphorylation of ERM proteins such as MSN. Acts as a negative regulator of MAP3K1/MEKK1. May also act as a cell cycle regulator by acting as a polo kinase kinase: mediates phosphorylation of PLK1 in vitro; however such data require additional evidences in vivo. This is Serine/threonine-protein kinase 10 (STK10) from Homo sapiens (Human).